Here is a 371-residue protein sequence, read N- to C-terminus: 2-oxoadipate dioxygenase/decarboxylase, chloroplastic (371 aa).

Residues 1–50 (MISLHSSAIKASLYGSFPSSLRSTLSVSFSAGSLIRLPSVGKRNLSVVVS) constitute a chloroplast transit peptide. 2-oxoadipate contacts are provided by H113 and R117. Fe(2+) is bound at residue H113. Position 250 (H250) interacts with Fe(2+). The 2-oxoadipate site is built by Q296 and Y320. Position 322 (E322) interacts with Fe(2+).

The protein belongs to the 2-oxoadipate dioxygenase/decarboxylase family. Fe(2+) serves as cofactor.

It is found in the plastid. Its subcellular location is the chloroplast. It carries out the reaction 2-oxoadipate + O2 = (R)-2-hydroxyglutarate + CO2. It functions in the pathway amino-acid degradation. Catalyzes the decarboxylation and hydroxylation of 2-oxoadipate (2OA) to form D-2-hydroxyglutarate (D-2-HGA). Is involved in a D-lysine catabolic pathway. In Arabidopsis thaliana (Mouse-ear cress), this protein is 2-oxoadipate dioxygenase/decarboxylase, chloroplastic.